A 100-amino-acid chain; its full sequence is NADH-quinone oxidoreductase subunit K (100 aa).

Transmembrane regions (helical) follow at residues 1 to 21 (MIGLNHYLIVSGLLFCIGLAG), 28 to 48 (ILLLFFSTEIMLNAINIGFVA), and 64 to 84 (FIIAIAASEVAIGLGLVILWF).

The protein belongs to the complex I subunit 4L family. As to quaternary structure, NDH-1 is composed of 14 different subunits. Subunits NuoA, H, J, K, L, M, N constitute the membrane sector of the complex.

The protein resides in the cell inner membrane. It carries out the reaction a quinone + NADH + 5 H(+)(in) = a quinol + NAD(+) + 4 H(+)(out). Functionally, NDH-1 shuttles electrons from NADH, via FMN and iron-sulfur (Fe-S) centers, to quinones in the respiratory chain. The immediate electron acceptor for the enzyme in this species is believed to be ubiquinone. Couples the redox reaction to proton translocation (for every two electrons transferred, four hydrogen ions are translocated across the cytoplasmic membrane), and thus conserves the redox energy in a proton gradient. The protein is NADH-quinone oxidoreductase subunit K of Helicobacter pylori (strain Shi470).